The sequence spans 300 residues: NAD kinase (300 aa).

Asp75 acts as the Proton acceptor in catalysis. NAD(+) contacts are provided by residues 75–76, 149–150, Arg177, Asp179, 190–195, Ala214, and Gln248; these read DG, ND, and TAYALS.

The protein belongs to the NAD kinase family. The cofactor is a divalent metal cation.

It is found in the cytoplasm. The enzyme catalyses NAD(+) + ATP = ADP + NADP(+) + H(+). Functionally, involved in the regulation of the intracellular balance of NAD and NADP, and is a key enzyme in the biosynthesis of NADP. Catalyzes specifically the phosphorylation on 2'-hydroxyl of the adenosine moiety of NAD to yield NADP. This chain is NAD kinase, found in Burkholderia mallei (strain SAVP1).